A 188-amino-acid chain; its full sequence is Casparian strip membrane protein 1 (188 aa).

Over 1-24 (MKAGALELGHASKTTKSGVNRGMS) the chain is Cytoplasmic. Residues 25-45 (ILDLFIRIIAIIATLGSAIAM) form a helical membrane-spanning segment. Residues 46–72 (GTTNETLPFFTQFVRFKAKYSDLPTFT) are Extracellular-facing. N-linked (GlcNAc...) asparagine glycosylation occurs at Asn49. The helical transmembrane segment at 73–93 (FFVVANAIVSAYLVLSLGLSI) threads the bilayer. The Cytoplasmic segment spans residues 94–105 (YHIMRSRAQATR). The chain crosses the membrane as a helical span at residues 106-126 (IALIFFDAAMLGLLTGGASAS). The Extracellular segment spans residues 127 to 159 (AAIVYLAHKGNRKTNWFPICQQYDSFCHRTSGS). Residues 160–180 (LVGSFAGSVLIILLIFLSAIA) traverse the membrane as a helical segment. Residues 181–188 (LSRQSLNH) are Cytoplasmic-facing.

It belongs to the Casparian strip membrane proteins (CASP) family. Homodimer and heterodimers.

Its subcellular location is the cell membrane. In terms of biological role, regulates membrane-cell wall junctions and localized cell wall deposition. Required for establishment of the Casparian strip membrane domain (CSD) and the subsequent formation of Casparian strips, a cell wall modification of the root endodermis that determines an apoplastic barrier between the intraorganismal apoplasm and the extraorganismal apoplasm and prevents lateral diffusion. The sequence is that of Casparian strip membrane protein 1 from Solanum tuberosum (Potato).